We begin with the raw amino-acid sequence, 546 residues long: NRAMP-like transporter smf-2 (546 aa).

The Cytoplasmic portion of the chain corresponds to 1–42 (MPGFQNANISDLAPPAREKTFDDTIAVKIPEDEKNTWFSWRK). A helical membrane pass occupies residues 43–63 (LWAFTGPGFLMSIAYLDPGNI). At 64 to 70 (ESDLQAG) the chain is on the extracellular side. A helical transmembrane segment spans residues 71–91 (AQAEYKLLWVLLVSHIVGMLL). Residues 92 to 119 (QRMSARLGVVSGKHMAEIAYDYYPLVPR) lie on the Cytoplasmic side of the membrane. A helical transmembrane segment spans residues 120 to 140 (IILWLMIEIAIVCSDMQEVIG). At 141–152 (TAIAIYLLSSGK) the chain is on the extracellular side. Residues 153–173 (IPLLVGVLITILDTFTFLFID) traverse the membrane as a helical segment. At 174–181 (RYGIRKLE) the chain is on the cytoplasmic side. Residues 182-202 (FIFVALISTMAISFGYEFVVM) traverse the membrane as a helical segment. The Extracellular portion of the chain corresponds to 203–228 (KPVLTKVLTGTVVPWCSGCGKEEIIT). A helical membrane pass occupies residues 229–249 (AISIFGAVIMPHNFYLHSALV). At 250-270 (KSRKVDRSSKTRIAEANKYFS) the chain is on the cytoplasmic side. Residues 271–291 (IESAFALSVSFFINLFVLSVF) traverse the membrane as a helical segment. Topologically, residues 292–334 (ARGLYQKTNGDVNSMCLSHNDIPDSNVFPNNTSSVTVDLFQGG) are extracellular. Asparagine 321 is a glycosylation site (N-linked (GlcNAc...) asparagine). The helical transmembrane segment at 335–355 (IYLGCQFGLFAMIIWAIGIFA) threads the bilayer. Residues 356–386 (AGQSSTMTGTYTGQFVMEGFVRISWPKWKRV) lie on the Cytoplasmic side of the membrane. Residues 387–407 (LITRAVAITPTLILCIKAHGI) form a helical membrane-spanning segment. The Extracellular segment spans residues 408–415 (KNLTGMND). A glycan (N-linked (GlcNAc...) asparagine) is linked at asparagine 409. Residues 416 to 436 (FLNCVQMVQLPFALIPMITFT) traverse the membrane as a helical segment. Over 437 to 453 (SSKRIMHNFRTSKPLQY) the chain is Cytoplasmic. The chain crosses the membrane as a helical span at residues 454–474 (FSIICGIITIGINVYFIFQYV). Over 475–483 (TENFGTGWL) the chain is Extracellular. The chain crosses the membrane as a helical span at residues 484 to 504 (IFVIIGPFTLLYIAFILYLAI). The Cytoplasmic portion of the chain corresponds to 505 to 546 (YCLVACELMNDTVNLPGFDFHRTLELDAPWITETFVVNDVYF).

The protein belongs to the NRAMP family. Expressed in dopaminergic neurons (at protein level). Primarily expressed in mc1, mc2 and mc3 epithelial cells of the pharynx and vpil-6 pharyngeal-intestinal valve cells displaying an anterior-posterior expression gradient. Expressed in gonad sheath cells.

Its subcellular location is the apical cell membrane. The protein resides in the cytoplasmic vesicle membrane. Its function is as follows. Probable divalent metal ion transporter which regulates Mn(2+) uptake. This chain is NRAMP-like transporter smf-2, found in Caenorhabditis elegans.